Reading from the N-terminus, the 184-residue chain is Putative tetraheme cytochrome-c type (184 aa).

Over 1–14 the chain is Cytoplasmic; sequence MSKHAASSAKRFSL. The chain crosses the membrane as a helical span at residues 15–35; that stretch reads LALGLMFVGGIVFVWAVDFGI. Over 36–184 the chain is Periplasmic; sequence KTTNTLEFCT…HEPTEPDDAS (149 aa). Residues Cys-44, Cys-47, Met-50, Cys-73, Cys-76, and His-77 each contribute to the heme site. 2 residues coordinate substrate: Lys-89 and Asp-95. Asp-95, Cys-133, Cys-136, His-137, Cys-165, Cys-168, His-169, and His-174 together coordinate heme.

The protein belongs to the NapC/NirT/NrfH family. Binds 4 heme groups per subunit.

The protein resides in the cell inner membrane. In Allochromatium vinosum (strain ATCC 17899 / DSM 180 / NBRC 103801 / NCIMB 10441 / D) (Chromatium vinosum), this protein is Putative tetraheme cytochrome-c type.